A 242-amino-acid chain; its full sequence is MLDMNPQETYTAPEEVNTPSRPIDENALLQRHQVMVKRVVNQLRVHATSHCSIEDMQQIGLIALVEAGRRYGDIDDTHFPAFAVCRVRGAILDELRRLDWRSRKTRQQAHELNDVTRDLTRSLGRMPTDSEIIKALGTDEQDYYNRQNAALAGEMQSLDQLMENSTDSHFGGQYDGMEHEHIRRSLDSALGRLSKRDQLLLTLFYQHELNLHEIALVLDLTPPRICQLHKQALKQLNQLMSS.

The Polymerase core binding signature appears at 55-68 (DMQQIGLIALVEAG). The segment at residues 211 to 230 (LHEIALVLDLTPPRICQLHK) is a DNA-binding region (H-T-H motif).

It belongs to the sigma-70 factor family.

Its function is as follows. Sigma factors are initiation factors that promote the attachment of RNA polymerase to specific initiation sites and are then released. This alternative sigma factor is specific for the flagellin gene (fliC) expression. This chain is RNA polymerase sigma factor for flagellar operon (lafS), found in Vibrio parahaemolyticus serotype O3:K6 (strain RIMD 2210633).